Reading from the N-terminus, the 319-residue chain is GTP 3',8-cyclase (319 aa).

Residues 4-227 enclose the Radical SAM core domain; that stretch reads KHGRKINYLR…VETEKSSTAL (224 aa). A GTP-binding site is contributed by arginine 13. Residues cysteine 20 and cysteine 24 each contribute to the [4Fe-4S] cluster site. Residue tyrosine 26 participates in S-adenosyl-L-methionine binding. Cysteine 27 contacts [4Fe-4S] cluster. Residue arginine 63 coordinates GTP. Glycine 67 provides a ligand contact to S-adenosyl-L-methionine. Residue threonine 94 coordinates GTP. Position 118 (serine 118) interacts with S-adenosyl-L-methionine. Lysine 155 contacts GTP. An S-adenosyl-L-methionine-binding site is contributed by methionine 189. 2 residues coordinate [4Fe-4S] cluster: cysteine 249 and cysteine 252. 254–256 contributes to the GTP binding site; the sequence is RVR. Cysteine 266 contributes to the [4Fe-4S] cluster binding site.

The protein belongs to the radical SAM superfamily. MoaA family. As to quaternary structure, monomer and homodimer. [4Fe-4S] cluster is required as a cofactor.

It catalyses the reaction GTP + AH2 + S-adenosyl-L-methionine = (8S)-3',8-cyclo-7,8-dihydroguanosine 5'-triphosphate + 5'-deoxyadenosine + L-methionine + A + H(+). Its pathway is cofactor biosynthesis; molybdopterin biosynthesis. Catalyzes the cyclization of GTP to (8S)-3',8-cyclo-7,8-dihydroguanosine 5'-triphosphate. The sequence is that of GTP 3',8-cyclase from Clostridium botulinum (strain ATCC 19397 / Type A).